Here is a 77-residue protein sequence, read N- to C-terminus: Translation initiation factor IF-1, chloroplastic (77 aa).

In terms of domain architecture, S1-like spans 1 to 71 (MKEQKLIHEG…TRGRIIYRLR (71 aa)).

Belongs to the IF-1 family. As to quaternary structure, component of the 30S ribosomal translation pre-initiation complex which assembles on the 30S ribosome in the order IF-2 and IF-3, IF-1 and N-formylmethionyl-tRNA(fMet); mRNA recruitment can occur at any time during PIC assembly.

The protein resides in the plastid. It localises to the chloroplast. In terms of biological role, one of the essential components for the initiation of protein synthesis. Stabilizes the binding of IF-2 and IF-3 on the 30S subunit to which N-formylmethionyl-tRNA(fMet) subsequently binds. Helps modulate mRNA selection, yielding the 30S pre-initiation complex (PIC). Upon addition of the 50S ribosomal subunit IF-1, IF-2 and IF-3 are released leaving the mature 70S translation initiation complex. The polypeptide is Translation initiation factor IF-1, chloroplastic (Calycanthus floridus var. glaucus (Eastern sweetshrub)).